Consider the following 383-residue polypeptide: Nuclear hormone receptor family member nhr-217 (383 aa).

Positions Ile53–Gln127 form a DNA-binding region, nuclear receptor. 2 consecutive NR C4-type zinc fingers follow at residues Cys56 to Cys77 and Cys93 to Cys109. The NR LBD domain maps to Ile172–Phe383.

This sequence belongs to the nuclear hormone receptor family.

Its subcellular location is the nucleus. Orphan nuclear receptor. The polypeptide is Nuclear hormone receptor family member nhr-217 (nhr-217) (Caenorhabditis elegans).